The primary structure comprises 373 residues: LIM domain-binding protein 2 (373 aa).

Disordered regions lie at residues 244-291 (APPA…ANLS) and 327-373 (QYDA…QASQ). The span at 263-280 (STSSTSNSSAGNNANSTG) shows a compositional bias: low complexity. The region spanning 298-337 (DVMVVGEPTLMGGEFGDEDERLITRLENTQYDAANGMDDE) is the LIM interaction domain (LID) domain. Positions 341-361 (NNSPALGNNSPWNSKPPATQE) are enriched in polar residues.

This sequence belongs to the LDB family. As to quaternary structure, interacts with LHX9. Interacts with SLK; leading to negatively regulate SLK kinase activity. Interacts with LMO4. Post-translationally, ubiquitinated by RLIM/RNF12, leading to its degradation by the proteasome.

The protein resides in the nucleus. In terms of biological role, transcription cofactor. Binds to the LIM domain of a wide variety of LIM domain-containing transcription factors. The polypeptide is LIM domain-binding protein 2 (LDB2) (Homo sapiens (Human)).